Here is a 471-residue protein sequence, read N- to C-terminus: Proline--tRNA ligase 2 (471 aa).

Belongs to the class-II aminoacyl-tRNA synthetase family. ProS type 3 subfamily. In terms of assembly, homodimer.

It localises to the cytoplasm. The enzyme catalyses tRNA(Pro) + L-proline + ATP = L-prolyl-tRNA(Pro) + AMP + diphosphate. In terms of biological role, catalyzes the attachment of proline to tRNA(Pro) in a two-step reaction: proline is first activated by ATP to form Pro-AMP and then transferred to the acceptor end of tRNA(Pro). This Streptomyces avermitilis (strain ATCC 31267 / DSM 46492 / JCM 5070 / NBRC 14893 / NCIMB 12804 / NRRL 8165 / MA-4680) protein is Proline--tRNA ligase 2.